The primary structure comprises 250 residues: MRIVGIIPARYQSSRFPGKPLVDILGKPMIRHVYERSARAGCLDRLIVATDDARIAAAVAGFGGEALLTRADHASGTDRLAEAARLLELDGADIVVNIQGDEPLVNHRMIEALVEALQCDRHCPMATLAFPSESLQDYNNPNVVKVVLDRGLRALYFSRAPIPFVRDGAADAPAFLKHLGFYAYSASFLQTFSRLPPGRLEGLEKLEQLRALEHGYGIRVALSPVDTRGVDTPEDLEAVVPVLAQDAVGA.

It belongs to the KdsB family.

The protein localises to the cytoplasm. It carries out the reaction 3-deoxy-alpha-D-manno-oct-2-ulosonate + CTP = CMP-3-deoxy-beta-D-manno-octulosonate + diphosphate. The protein operates within nucleotide-sugar biosynthesis; CMP-3-deoxy-D-manno-octulosonate biosynthesis; CMP-3-deoxy-D-manno-octulosonate from 3-deoxy-D-manno-octulosonate and CTP: step 1/1. Its pathway is bacterial outer membrane biogenesis; lipopolysaccharide biosynthesis. Functionally, activates KDO (a required 8-carbon sugar) for incorporation into bacterial lipopolysaccharide in Gram-negative bacteria. In Syntrophobacter fumaroxidans (strain DSM 10017 / MPOB), this protein is 3-deoxy-manno-octulosonate cytidylyltransferase.